Reading from the N-terminus, the 182-residue chain is Large ribosomal subunit protein uL6 (182 aa).

It belongs to the universal ribosomal protein uL6 family. As to quaternary structure, part of the 50S ribosomal subunit.

Functionally, this protein binds to the 23S rRNA, and is important in its secondary structure. It is located near the subunit interface in the base of the L7/L12 stalk, and near the tRNA binding site of the peptidyltransferase center. The protein is Large ribosomal subunit protein uL6 of Pelotomaculum thermopropionicum (strain DSM 13744 / JCM 10971 / SI).